An 836-amino-acid polypeptide reads, in one-letter code: MVLLNGKLKYIAVVAIFYNLIILLVKEKFPYICTKKKFHAISNRILYEYLNNFVSKDIFRREDITLKNLNFVQTNLKSDKDAEIKENRDTQSVDDNMFQRVYKFILNFFYGNKKNRINKSMNYGKYDNFNKINDIFEFMRNNGLPINITSVCLIDTGLNIKDALINYFLNHDISTYNSYTYHSVNINYKKPDSFNFGINSENCDEDNYSECESTFLENHNGHGKYEDKSTIQGDSLKLIEKKYDKNVDLQRSGIDVEICKAFNNSKEKKNSLNIIPVIKCLEYCKTKNVKIIHMDYNINEQNEQLIQIMDDLKNSEIFVILPSEKLFNEKPYEDNSVIYPSSFFEKFENVFFIGSLDYSDMSSDDADIASNFQIQKNEYLKYRKNNVFLLDSINSSLKKRDDHDILYYEIKYSSAFFINIITIILNIYPNMSIKELRNILSYSIPSKETAQLKTENIFEGNFDINKFIHILLNRGINSSGFVRKYKDVTPNESTNKIFLLEDQKDADIEPQKDSSIDIYCDEGGSDEDIVSTSNGLDVYSEYSHSNNKSDQLLNDEKGLKYETYKDLYSVKENDIYVFESNNPTNSSFMQMNYDDKIKSKYLDNLEEANYQNHRTQFEINRNDNRYPIISEDNLRDRQNMHNIQMLNDGINYSENANNIEELYDNDFEDYRGKDLNPEYNKIRDNNNNKNINKEFGILNTWRKNNEGLYLSDSEEESQPFKWMDMHVDDIYQDRKKRLKGNNYDNRNGRVRRIYEDNKRGRYIKNRNMQKKKNFDRNLKNKRYLNRRTKRHINEKNKRIMREKKNKYNNSVLKRNEMKSHNNSQKTPKIIPRKYSR.

Active-site charge relay system residues include aspartate 155, histidine 222, and serine 414. Residues 802-836 are disordered; it reads EKKNKYNNSVLKRNEMKSHNNSQKTPKIIPRKYSR.

Belongs to the peptidase S8 family.

It localises to the cell membrane. It carries out the reaction Hydrolysis of proteins with broad specificity for peptide bonds, and a preference for a large uncharged residue in P1. Hydrolyzes peptide amides.. Functionally, probable serine protease which plays a role in ookinete traversal of the mosquito host midgut epithelium. The sequence is that of Subtilisin-like protease PIMMS2 from Plasmodium berghei (strain Anka).